Here is a 595-residue protein sequence, read N- to C-terminus: Probable carotenoid cleavage dioxygenase 4, chloroplastic (595 aa).

Residues 1–34 (MDSVSSSSFLSSTFSLHHSLLRRRSSSPTLLRIN) constitute a chloroplast transit peptide. Residues 41–74 (RSPITNPSDNNDRRNKPKTLHNRTNHTLVSSPPK) form a disordered region. Residues 55 to 64 (NKPKTLHNRT) show a composition bias toward basic residues. Fe cation contacts are provided by His-287, His-336, His-404, and His-583.

This sequence belongs to the carotenoid oxygenase family. In terms of assembly, interacts with VAR3. Interacts with PGM48. It depends on Fe(2+) as a cofactor. As to expression, mostly expressed in flowers (e.g. sepals and petals), siliques, seeds, leaves and cotyledons.

It is found in the plastid. It localises to the chloroplast. Its subcellular location is the plastoglobule. In terms of biological role, may be involved in carotenoid cleavage. In Arabidopsis thaliana (Mouse-ear cress), this protein is Probable carotenoid cleavage dioxygenase 4, chloroplastic (CCD4).